Consider the following 440-residue polypeptide: Zinc finger MYND domain-containing protein 10 (440 aa).

The segment at 366–440 is interaction with DNAAF11; that stretch reads QDLRLQARRW…VLAAQGDRAK (75 aa). Residues Cys394, Cys397, Cys405, Cys408, Cys414, Cys418, His426, and Cys430 each contribute to the Zn(2+) site. The segment at 394-430 adopts an MYND-type zinc-finger fold; the sequence is CAYCSAEASKRCSRCQNEWYCCRECQVKHWEKHGKTC.

It belongs to the ZMYND10 family. As to quaternary structure, interacts (via C-terminus) with DNAAF11 (via CS domain); this interaction stabilizes DNAAF11 at the protein level. Interacts (via C-terminus) with DNAL1; this interaction stabilizes DNAL1 at the protein level. Interacts with DNAAF4, HSPA8, IQUB, RUVBL2 and DYNTL5.

It localises to the cytoplasm. It is found in the cytoskeleton. The protein localises to the microtubule organizing center. Its subcellular location is the centrosome. The protein resides in the centriolar satellite. It localises to the apical cell membrane. It is found in the dynein axonemal particle. Plays a role in axonemal structure organization and motility. Involved in axonemal pre-assembly of inner and outer dynein arms (IDA and ODA, respectively) for proper axoneme building for cilia motility. May act by indirectly regulating transcription of dynein proteins. In Homo sapiens (Human), this protein is Zinc finger MYND domain-containing protein 10.